The following is a 269-amino-acid chain: Glutamate racemase (269 aa).

Substrate contacts are provided by residues 13 to 14 (DS) and 45 to 46 (YS). The active-site Proton donor/acceptor is C77. 78–79 (NT) is a binding site for substrate. Residue C188 is the Proton donor/acceptor of the active site. 189–190 (TH) provides a ligand contact to substrate.

Belongs to the aspartate/glutamate racemases family.

The catalysed reaction is L-glutamate = D-glutamate. Its pathway is cell wall biogenesis; peptidoglycan biosynthesis. In terms of biological role, provides the (R)-glutamate required for cell wall biosynthesis. In Pasteurella multocida (strain Pm70), this protein is Glutamate racemase.